The primary structure comprises 137 residues: Large ribosomal subunit protein uL13 (137 aa).

A Citrulline modification is found at arginine 55. Serine 73 is modified (phosphoserine). Arginine 136 is modified (citrulline).

Belongs to the universal ribosomal protein uL13 family. Component of the 60S ribosome. Component of the GAIT complex. Interacts with EIF4G1. Post-translationally, phosphorylation at Ser-73 upon interferon-gamma treatment in macrophages involves a DAPK1-DAPK3 kinase cascade and is causing release from the ribosome, association with the GAIT complex and subsequent involvement in transcript-selective translation inhibition. In terms of processing, citrullinated by PADI4.

It localises to the cytoplasm. Functionally, associated with ribosomes but is not required for canonical ribosome function and has extra-ribosomal functions. Component of the GAIT (gamma interferon-activated inhibitor of translation) complex which mediates interferon-gamma-induced transcript-selective translation inhibition in inflammation processes. Upon interferon-gamma activation and subsequent phosphorylation dissociates from the ribosome and assembles into the GAIT complex which binds to stem loop-containing GAIT elements in the 3'-UTR of diverse inflammatory mRNAs (such as ceruplasmin) and suppresses their translation. In the GAIT complex interacts with m7G cap-bound eIF4G at or near the eIF3-binding site and blocks the recruitment of the 43S ribosomal complex. Involved in methylation of rRNA. This chain is Large ribosomal subunit protein uL13 (RPL13A), found in Sus scrofa (Pig).